A 663-amino-acid polypeptide reads, in one-letter code: MDADNSTLPTEQSAVRETCDRDVTMSPRKRRRLSVSLEPELTEPEAAGTPGERCSTADTPESTASEPRSLFNSTPTEGNIAPFLTKHIKDQHASRNRFAPIDSSLPRRKADSKYCYRHRPDLKCRRQAVEPTVDQMQRDLSTLSQNDQQSIAHFWSLFSAAPSKHRNLMLQGIVAQCCFPQLSFLSASVRDLIRIDFVTALPPEISFKILSYLDTASLCSAAQVSHSWRALADDDVVWHRMCEQHIDRKCEKCGWGLPMLDRKRLKDTKRQVQLRAAGKEIAPNQRPQQQHRPWKAVYMDRFKVGTNWKYGRCTTTIFRGHTNGVMCLQFDDNILATGSYDATIKIWDIETGKEIRTLRGHESTIRCLQFDDTKLISGSLDRTIKVWNWRSGECISTYTGHQGGVLCLHFDSTTLASGSKDNTIKIWNFHDKSTRILRGHADWVNSVKLDTASRTVFSASDDLTVRIWDLDTGKCIHSYAGHVGQVQQVLPLPREFEFKHQSNCADDRSDRLSGSESPDHRGSHGYRSNNAPDQQPNTSAPPTEPMSPLFEALFTEDQGRPAPPRYMLTAALDLTLRLWEVHTGRCLRTFFGHIEGVWGLAADTLRFVSGAQDHMAKVWDPRTGTCERTFTGHRGPVTCVSLSDSRMATGSEDSEVRMYSFKA.

Polar residues-rich tracts occupy residues M1–V15 and T56–E77. Residues M1 to I80 are disordered. Residues I195–M241 form the F-box domain. WD repeat units lie at residues G320–R359, H361–T399, G400–L437, and G439–A480. A compositionally biased stretch (basic and acidic residues) spans N503–G522. Residues N503–S547 are disordered. Polar residues predominate over residues Y526–P541. WD repeat units lie at residues E544–T589, G592–T629, and G632–A663.

This sequence belongs to the WD repeat MET30/SCONB/SCON-2 family. In terms of assembly, component of the SCF(sconB) E3 ubiquitin ligase complex.

It participates in protein modification; protein ubiquitination. Its function is as follows. Component of the SCF(sconB) E3 ubiquitin ligase complex involved in the regulation of sulfur metabolite repression, probably by mediating the inactivation or degradation of the metR transcription factor. The chain is Probable E3 ubiquitin ligase complex SCF subunit sconB (sconB) from Arthroderma benhamiae (strain ATCC MYA-4681 / CBS 112371) (Trichophyton mentagrophytes).